The primary structure comprises 461 residues: Early growth response factor homolog 1 (461 aa).

3 disordered regions span residues 1-25 (MALH…PSLN), 96-152 (TLMP…ELTL), and 232-308 (DVLH…YSSL). 4 stretches are compositionally biased toward polar residues: residues 96 to 105 (TLMPAPSSSY), 129 to 144 (GSNS…GNSK), 249 to 265 (LGSS…SRPS), and 272 to 291 (QRTN…SMSP). A compositionally biased stretch (low complexity) spans 299-308 (YSNSASYSSL). 3 consecutive C2H2-type zinc fingers follow at residues 374–398 (YKCP…IRIH), 404–426 (FQCR…VRTH), and 432–454 (FSCD…TKVH).

The protein belongs to the EGR C2H2-type zinc-finger protein family. In terms of tissue distribution, expressed in sheath cells and distal tip cells of the somatic gonad, as well as in the intestine and sperm (at protein level). Expression not observed in oocytes (at protein level).

It is found in the nucleus. Its subcellular location is the cytoplasm. The protein resides in the perinuclear region. Sequence-specific DNA-binding transcription factor. Plays a role in oocyte development, acting cell-autonomously in the somatic gonad. Involved in negative regulation of oocyte MAPK activation and inhibits oocyte maturation and ovulation. The sequence is that of Early growth response factor homolog 1 from Caenorhabditis elegans.